The primary structure comprises 510 residues: Ribonuclease Y (510 aa).

A helical transmembrane segment spans residues 4–24; the sequence is LLWAVVALLAGLAGGAGIGVY. A KH domain is found at 200–260; the sequence is TVSTVNLPSE…VRREVARVAL (61 aa). Positions 326–419 constitute an HD domain; sequence VLQHSLECAL…VIAADAISGA (94 aa).

The protein belongs to the RNase Y family.

Its subcellular location is the cell membrane. Functionally, endoribonuclease that initiates mRNA decay. This is Ribonuclease Y from Chloroflexus aurantiacus (strain ATCC 29366 / DSM 635 / J-10-fl).